Here is a 415-residue protein sequence, read N- to C-terminus: ATP-dependent RNA helicase RhlB (415 aa).

The Q motif motif lies at 9 to 37 (KKFSDFALYPPIVEVLDSKGFNNCTPIQA). Positions 40–219 (LPTTLAGKDV…FEHMNNAEYV (180 aa)) constitute a Helicase ATP-binding domain. 53-60 (AQTGTGKT) provides a ligand contact to ATP. Positions 165 to 168 (DEAD) match the DEAD box motif. One can recognise a Helicase C-terminal domain in the interval 245-390 (RLLQTLIEEE…VSKYNSDALL (146 aa)). The segment at 396-415 (PKRLTRRRSGAPRHNRKRPG) is disordered. Positions 398–415 (RLTRRRSGAPRHNRKRPG) are enriched in basic residues.

This sequence belongs to the DEAD box helicase family. RhlB subfamily. In terms of assembly, component of the RNA degradosome, which is a multiprotein complex involved in RNA processing and mRNA degradation.

It localises to the cytoplasm. It carries out the reaction ATP + H2O = ADP + phosphate + H(+). Functionally, DEAD-box RNA helicase involved in RNA degradation. Has RNA-dependent ATPase activity and unwinds double-stranded RNA. The protein is ATP-dependent RNA helicase RhlB of Sodalis glossinidius (strain morsitans).